A 421-amino-acid polypeptide reads, in one-letter code: UDP-N-acetylglucosamine 1-carboxyvinyltransferase (421 aa).

Position 22 to 23 (Lys22 to Asn23) interacts with phosphoenolpyruvate. A UDP-N-acetyl-alpha-D-glucosamine-binding site is contributed by Arg92. The active-site Proton donor is the Cys116. The residue at position 116 (Cys116) is a 2-(S-cysteinyl)pyruvic acid O-phosphothioketal. Residues Asp306 and Val328 each contribute to the UDP-N-acetyl-alpha-D-glucosamine site.

The protein belongs to the EPSP synthase family. MurA subfamily.

It is found in the cytoplasm. The catalysed reaction is phosphoenolpyruvate + UDP-N-acetyl-alpha-D-glucosamine = UDP-N-acetyl-3-O-(1-carboxyvinyl)-alpha-D-glucosamine + phosphate. It participates in cell wall biogenesis; peptidoglycan biosynthesis. Its function is as follows. Cell wall formation. Adds enolpyruvyl to UDP-N-acetylglucosamine. In Thermotoga petrophila (strain ATCC BAA-488 / DSM 13995 / JCM 10881 / RKU-1), this protein is UDP-N-acetylglucosamine 1-carboxyvinyltransferase.